A 240-amino-acid chain; its full sequence is Protein MGARP (240 aa).

The Cytoplasmic portion of the chain corresponds to 1–45; that stretch reads MYLRRAVSKTLALPLRAPPGPAPLRKDASLRWISSNKFPGSSGSN. The helical; Anchor for type IV membrane protein transmembrane segment at 46 to 64 threads the bilayer; the sequence is MIYYLVVGVTVSAGGYYTY. Topologically, residues 65 to 240 are mitochondrial intermembrane; sequence KRVTSGKAKR…AGSEAASAQG (176 aa). Residues 72 to 240 form a disordered region; sequence AKRSDHVTDL…AGSEAASAQG (169 aa). Over residues 73–87 the composition is skewed to basic and acidic residues; it reads KRSDHVTDLKEKTKA. Composition is skewed to low complexity over residues 166-183 and 228-240; these read TVETTEVSTETTSEVTST and EACAGSEAASAQG.

As to quaternary structure, interacts with RHOT1/Miro-1, RHOT2/Miro-2, TRAK1/OIP106 and TRAK2/GRIF1.

The protein localises to the mitochondrion. It localises to the mitochondrion outer membrane. Its subcellular location is the mitochondrion inner membrane. In terms of biological role, plays a role in the trafficking of mitochondria along microtubules. Regulates the kinesin-mediated axonal transport of mitochondria to nerve terminals along microtubules during hypoxia. Participates in the translocation of TRAK2/GRIF1 from the cytoplasm to the mitochondrion. Also plays a role in steroidogenesis through maintenance of mitochondrial abundance and morphology. Plays an inhibitory role during neocortex development by regulating mitochondrial morphology, distribution and motility in neocortical neurons. The protein is Protein MGARP (MGARP) of Bos taurus (Bovine).